A 109-amino-acid polypeptide reads, in one-letter code: NAD(P)H-quinone oxidoreductase subunit M (109 aa).

Belongs to the complex I NdhM subunit family. In terms of assembly, NDH-1 can be composed of about 15 different subunits; different subcomplexes with different compositions have been identified which probably have different functions.

The protein localises to the cellular thylakoid membrane. It catalyses the reaction a plastoquinone + NADH + (n+1) H(+)(in) = a plastoquinol + NAD(+) + n H(+)(out). The catalysed reaction is a plastoquinone + NADPH + (n+1) H(+)(in) = a plastoquinol + NADP(+) + n H(+)(out). Its function is as follows. NDH-1 shuttles electrons from an unknown electron donor, via FMN and iron-sulfur (Fe-S) centers, to quinones in the respiratory and/or the photosynthetic chain. The immediate electron acceptor for the enzyme in this species is believed to be plastoquinone. Couples the redox reaction to proton translocation, and thus conserves the redox energy in a proton gradient. Cyanobacterial NDH-1 also plays a role in inorganic carbon-concentration. This chain is NAD(P)H-quinone oxidoreductase subunit M, found in Microcystis aeruginosa (strain NIES-843 / IAM M-2473).